The primary structure comprises 61 residues: Temporin-CDYa (61 aa).

The signal sequence occupies residues 1–22 (MFPLKKSLLLLFFLGTINFSFC). The propeptide occupies 23-44 (EEERNAEEERRDDPEERDVAME). Position 59 is a leucine amide (Leu-59).

This sequence belongs to the frog skin active peptide (FSAP) family. Temporin subfamily. As to expression, expressed by the skin glands.

The protein localises to the secreted. Its function is as follows. Antimicrobial peptide. This chain is Temporin-CDYa, found in Rana dybowskii (Dybovsky's frog).